The sequence spans 613 residues: Replication protein E1 (613 aa).

The tract at residues 1–31 (MDPNLKGITGQSFLDDQAECSESDNSEQGCE) is disordered. Positions 16 to 31 (DQAECSESDNSEQGCE) are enriched in acidic residues. The short motif at 71–73 (KRK) is the Nuclear localization signal element. Residues Ser77 and Ser92 each carry the phosphoserine; by host modification. A disordered region spans residues 128–152 (YGSLASQSLSGQSQKNGKNRVNNGN). Low complexity predominate over residues 129 to 152 (GSLASQSLSGQSQKNGKNRVNNGN). A DNA-binding region region spans residues 150–317 (NGNKENIDCT…TSITHQIQED (168 aa)). Residues 413-566 (YQNINFLSFL…FPLDENGKPA (154 aa)) enclose the SF3 helicase domain. 442–449 (GPPNTGKS) lines the ATP pocket. Positions 588–597 (TEPEDEDDGD) are enriched in acidic residues. Positions 588 to 613 (TEPEDEDDGDPPSPFRCSARAAARDL) are disordered.

The protein belongs to the papillomaviridae E1 protein family. Can form hexamers. Interacts with E2 protein; this interaction increases E1 DNA binding specificity. Interacts with host DNA polymerase subunit POLA2. Interacts with host single stranded DNA-binding protein RPA1. Interacts with host TOP1; this interaction stimulates the enzymatic activity of TOP1. In terms of processing, phosphorylated.

The protein resides in the host nucleus. It carries out the reaction Couples ATP hydrolysis with the unwinding of duplex DNA by translocating in the 3'-5' direction.. The enzyme catalyses ATP + H2O = ADP + phosphate + H(+). ATP-dependent DNA 3'-5' helicase required for initiation of viral DNA replication. It forms a complex with the viral E2 protein. The E1-E2 complex binds to the replication origin which contains binding sites for both proteins. During the initial step, a dimer of E1 interacts with a dimer of protein E2 leading to a complex that binds the viral origin of replication with high specificity. Then, a second dimer of E1 displaces the E2 dimer in an ATP-dependent manner to form the E1 tetramer. Following this, two E1 monomers are added to each half of the site, which results in the formation of two E1 trimers on the viral ori. Subsequently, two hexamers will be created. The double hexamer acts as a bi-directional helicase machinery and unwinds the viral DNA and then recruits the host DNA polymerase to start replication. The sequence is that of Replication protein E1 from Bos taurus (Bovine).